The following is a 139-amino-acid chain: ATP synthase epsilon chain (139 aa).

This sequence belongs to the ATPase epsilon chain family. F-type ATPases have 2 components, CF(1) - the catalytic core - and CF(0) - the membrane proton channel. CF(1) has five subunits: alpha(3), beta(3), gamma(1), delta(1), epsilon(1). CF(0) has three main subunits: a, b and c.

The protein localises to the cell inner membrane. In terms of biological role, produces ATP from ADP in the presence of a proton gradient across the membrane. This Escherichia coli O139:H28 (strain E24377A / ETEC) protein is ATP synthase epsilon chain.